The sequence spans 473 residues: Argininosuccinate lyase (473 aa).

This sequence belongs to the lyase 1 family. Argininosuccinate lyase subfamily.

It is found in the cytoplasm. It carries out the reaction 2-(N(omega)-L-arginino)succinate = fumarate + L-arginine. It functions in the pathway amino-acid biosynthesis; L-arginine biosynthesis; L-arginine from L-ornithine and carbamoyl phosphate: step 3/3. In Nocardia farcinica (strain IFM 10152), this protein is Argininosuccinate lyase.